The following is a 317-amino-acid chain: MSGSPKFVSPFHRPHCLSAAAPAGQAKLTHPGKAILAGGIAGGIEICITFPTEYVKTQLQLDEKANPPRYKGIVDCVKQTVQGHGVKGLYRGLSSLLYGSIPKAAVRFGVFEFLSNQMRDESGKLDSTRGLICGLGAGVAEAVVVVCPMETVKVKFIHDQTSANPKYRGFFHGVREIVRTQGLKGTYQGLTATVLKQGSNQAIRFYVMTALRNWYKGDNPNKSINPVVTGLFGAVAGAASVFGNTPLDVIKTRMQGLEAHKYKSTVDCAIKIMKYEGPAAFYKGTVPRLGRVCMDVAIVFIIYEEVVKVLNKVWKTD.

Positions 1-20 (MSGSPKFVSPFHRPHCLSAA) are cleaved as a propeptide — removed in mature form. Solcar repeat units lie at residues 29 to 117 (THPG…LSNQ), 128 to 214 (TRGL…LRNW), and 224 to 309 (INPV…VVKV). The next 4 helical transmembrane spans lie at 35-55 (ILAG…TEYV), 130-150 (GLIC…CPME), 223-243 (SINP…SVFG), and 294-314 (MDVA…NKVW).

Belongs to the mitochondrial carrier (TC 2.A.29) family. Possesses a short cleavable presequence, which, however, is found to be dispensable both for targeting to mitochondria and insertion into the inner membrane. However, the presequence is required to keep SLC25A1 in a soluble state and thus in an import-competent state. Mature SLC25A1 lacking the presequence is prone to aggregation.

It localises to the mitochondrion inner membrane. The catalysed reaction is (S)-malate(in) + citrate(out) = (S)-malate(out) + citrate(in). It catalyses the reaction D-threo-isocitrate(in) + citrate(out) = D-threo-isocitrate(out) + citrate(in). The enzyme catalyses citrate(out) + succinate(in) = citrate(in) + succinate(out). It carries out the reaction cis-aconitate(in) + citrate(out) = cis-aconitate(out) + citrate(in). The catalysed reaction is trans-aconitate(in) + citrate(out) = trans-aconitate(out) + citrate(in). It catalyses the reaction phosphoenolpyruvate(in) + citrate(out) = phosphoenolpyruvate(out) + citrate(in). The enzyme catalyses maleate(in) + citrate(out) = maleate(out) + citrate(in). Its function is as follows. Mitochondrial electroneutral antiporter that exports citrate from the mitochondria into the cytosol in exchange for malate. Also able to mediate the exchange of citrate for isocitrate, phosphoenolpyruvate, cis-aconitate and to a lesser extent trans-aconitate, maleate and succinate. In the cytoplasm, citrate plays important roles in fatty acid and sterol synthesis, regulation of glycolysis, protein acetylation, and other physiopathological processes. The chain is Tricarboxylate transport protein B, mitochondrial from Danio rerio (Zebrafish).